We begin with the raw amino-acid sequence, 442 residues long: Proline--tRNA ligase (442 aa).

This sequence belongs to the class-II aminoacyl-tRNA synthetase family. ProS type 2 subfamily. As to quaternary structure, homodimer.

It is found in the cytoplasm. The enzyme catalyses tRNA(Pro) + L-proline + ATP = L-prolyl-tRNA(Pro) + AMP + diphosphate. In terms of biological role, catalyzes the attachment of proline to tRNA(Pro) in a two-step reaction: proline is first activated by ATP to form Pro-AMP and then transferred to the acceptor end of tRNA(Pro). The polypeptide is Proline--tRNA ligase (Brucella ovis (strain ATCC 25840 / 63/290 / NCTC 10512)).